We begin with the raw amino-acid sequence, 547 residues long: Beta,beta-carotene 15,15'-dioxygenase (547 aa).

H172, H237, H308, and H514 together coordinate Fe cation. Over residues 528-540 (QAASEEQRDRASD) the composition is skewed to basic and acidic residues. The interval 528–547 (QAASEEQRDRASDCHGAPLT) is disordered.

The protein belongs to the carotenoid oxygenase family. Fe(2+) serves as cofactor. Highly expressed in retinal pigment epithelium. Also expressed in kidney, testis, liver, brain, small intestine and colon.

The protein localises to the cytoplasm. It is found in the cytosol. The enzyme catalyses all-trans-beta-carotene + O2 = 2 all-trans-retinal. Its pathway is cofactor metabolism; retinol metabolism. Symmetrically cleaves beta-carotene into two molecules of retinal using a dioxygenase mechanism. The protein is Beta,beta-carotene 15,15'-dioxygenase of Homo sapiens (Human).